The primary structure comprises 101 residues: Transcription and mRNA export factor SUS1 (101 aa).

The protein belongs to the ENY2 family. As to quaternary structure, component of the nuclear pore complex (NPC)-associated TREX-2 complex (transcription and export complex 2), composed of at least SUS1, SAC3, THP1, SEM1, and CDC31. TREX-2 contains 2 SUS1 chains. The TREX-2 complex interacts with the nucleoporin NUP1. Component of the 1.8 MDa SAGA transcription coactivator-HAT complex. SAGA is built of 5 distinct domains with specialized functions. Within the SAGA complex, SUS1, SGF11, SGF73 and UBP8 form an additional subcomplex of SAGA called the DUB module (deubiquitination module). Interacts directly with THP1, SAC3, SGF11, and with the RNA polymerase II.

The protein resides in the nucleus. It is found in the nucleoplasm. The protein localises to the cytoplasm. Its subcellular location is the P-body. Involved in mRNA export coupled transcription activation by association with both the TREX-2 and the SAGA complexes. At the promoters, SAGA is required for recruitment of the basal transcription machinery. It influences RNA polymerase II transcriptional activity through different activities such as TBP interaction and promoter selectivity, interaction with transcription activators, and chromatin modification through histone acetylation and deubiquitination. Within the SAGA complex, participates in a subcomplex required for deubiquitination of H2B and for the maintenance of steady-state H3 methylation levels. The TREX-2 complex functions in docking export-competent ribonucleoprotein particles (mRNPs) to the nuclear entrance of the nuclear pore complex (nuclear basket). TREX-2 participates in mRNA export and accurate chromatin positioning in the nucleus by tethering genes to the nuclear periphery. May also be involved in cytoplasmic mRNA decay by interaction with components of P-bodies. The chain is Transcription and mRNA export factor SUS1 from Debaryomyces hansenii (strain ATCC 36239 / CBS 767 / BCRC 21394 / JCM 1990 / NBRC 0083 / IGC 2968) (Yeast).